The primary structure comprises 344 residues: D-amino-acid oxidase (344 aa).

FAD is bound by residues Ala-11, Ser-14, Ser-49, Gly-53, Asn-55, and Ile-167. 2 residues coordinate (R)-lactate: Tyr-229 and Arg-290. 2 residues coordinate anthranilate: Tyr-229 and Arg-290. The FAD site is built by Arg-290, Ser-321, Gly-324, Tyr-325, and Gln-326.

It belongs to the DAMOX/DASOX family. FAD serves as cofactor.

Its subcellular location is the peroxisome. It carries out the reaction a D-alpha-amino acid + O2 + H2O = a 2-oxocarboxylate + H2O2 + NH4(+). It catalyses the reaction D-alanine + O2 + H2O = pyruvate + H2O2 + NH4(+). In terms of biological role, catalyzes the oxidative deamination of D-amino acids with broad substrate specificity. Enables the organism to utilize D-amino acids as a source of nutrients. Enables the organism to utilize D-alanine as a source of nitrogen. The protein is D-amino-acid oxidase of Komagataella phaffii (strain GS115 / ATCC 20864) (Yeast).